A 745-amino-acid polypeptide reads, in one-letter code: Probable endochitinase ARB_07371 (745 aa).

Positions 1–23 (MALPKTIMAFIAFISFLVSTTFA) are cleaved as a signal peptide. One can recognise a GH18 domain in the interval 30-351 (TNVVTYWGQG…SNIKRLLLNN (322 aa)). E178 (proton donor) is an active-site residue. Disordered stretches follow at residues 351-372 (NDPS…SMST) and 395-446 (WSMP…TTEI). The span at 357 to 372 (TTTSKTMSSTKTSMST) shows a compositional bias: low complexity. Residues N438 and N484 are each glycosylated (N-linked (GlcNAc...) asparagine). Residues 651–715 (SEPMTPTQVP…EMGGNGGDRT (65 aa)) form a disordered region. G720 is lipidated: GPI-anchor amidated glycine. Positions 721–745 (GAGVVSPSFSVVVIVLGSIVYHIMQ) are cleaved as a propeptide — removed in mature form.

This sequence belongs to the glycosyl hydrolase 18 family. Chitinase class III subfamily.

It localises to the cell membrane. The protein localises to the secreted. The protein resides in the cell wall. The enzyme catalyses Random endo-hydrolysis of N-acetyl-beta-D-glucosaminide (1-&gt;4)-beta-linkages in chitin and chitodextrins.. GPI-anchored chitinase involved in the degradation of chitin, a component of the cell walls of fungi and exoskeletal elements of some animals (including worms and arthropods). Required to reshape the cell wall at the sites where cell wall remodeling and/or cell wall maturation actively take place such as sites of conidia formation. The polypeptide is Probable endochitinase ARB_07371 (Arthroderma benhamiae (strain ATCC MYA-4681 / CBS 112371) (Trichophyton mentagrophytes)).